A 162-amino-acid chain; its full sequence is UPF0178 protein RSKD131_2223 (162 aa).

Belongs to the UPF0178 family.

This Cereibacter sphaeroides (strain KD131 / KCTC 12085) (Rhodobacter sphaeroides) protein is UPF0178 protein RSKD131_2223.